Consider the following 189-residue polypeptide: H/ACA ribonucleoprotein complex subunit 1-like protein 2 (189 aa).

The segment covering 1–12 (MRPPRGGGSFRG) has biased composition (gly residues). Disordered stretches follow at residues 1-39 (MRPP…NYDE) and 129-189 (RFLP…RGRA). Over residues 162–177 (GRGAPRGASRGFQPRG) the composition is skewed to low complexity.

It belongs to the GAR1 family. In terms of assembly, component of the small nucleolar ribonucleoprotein particle containing H/ACA-type snoRNAs (H/ACA snoRNPs).

The protein localises to the nucleus. Its subcellular location is the nucleolus. Its function is as follows. Required for ribosome biogenesis. Part of a complex which catalyzes pseudouridylation of rRNA. This involves the isomerization of uridine such that the ribose is subsequently attached to C5, instead of the normal N1. Pseudouridine ('psi') residues may serve to stabilize the conformation of rRNAs. The sequence is that of H/ACA ribonucleoprotein complex subunit 1-like protein 2 from Arabidopsis thaliana (Mouse-ear cress).